We begin with the raw amino-acid sequence, 257 residues long: Ribonuclease HII (257 aa).

An RNase H type-2 domain is found at 72–257; that stretch reads TYIAGIDEVG…FAPIKDMIQK (186 aa). A divalent metal cation-binding residues include D78, E79, and D170.

It belongs to the RNase HII family. Requires Mn(2+) as cofactor. Mg(2+) is required as a cofactor.

It is found in the cytoplasm. It carries out the reaction Endonucleolytic cleavage to 5'-phosphomonoester.. Functionally, endonuclease that specifically degrades the RNA of RNA-DNA hybrids. The sequence is that of Ribonuclease HII from Bacillus mycoides (strain KBAB4) (Bacillus weihenstephanensis).